Here is a 422-residue protein sequence, read N- to C-terminus: Glucose-1-phosphate adenylyltransferase (422 aa).

Residues Y110, G175, E190–K191, and S208 contribute to the alpha-D-glucose 1-phosphate site.

Belongs to the bacterial/plant glucose-1-phosphate adenylyltransferase family. In terms of assembly, homotetramer.

The enzyme catalyses alpha-D-glucose 1-phosphate + ATP + H(+) = ADP-alpha-D-glucose + diphosphate. It participates in glycan biosynthesis; glycogen biosynthesis. Its function is as follows. Involved in the biosynthesis of ADP-glucose, a building block required for the elongation reactions to produce glycogen. Catalyzes the reaction between ATP and alpha-D-glucose 1-phosphate (G1P) to produce pyrophosphate and ADP-Glc. This chain is Glucose-1-phosphate adenylyltransferase, found in Hydrogenovibrio crunogenus (strain DSM 25203 / XCL-2) (Thiomicrospira crunogena).